A 171-amino-acid polypeptide reads, in one-letter code: Disulfide bond formation protein B (171 aa).

Over 1-8 (MRLSYRLV) the chain is Cytoplasmic. The chain crosses the membrane as a helical span at residues 9-25 (SGLLVLASIVGMSFALY). Topologically, residues 26–43 (LEHVKGLEPCPLCIFQRV) are periplasmic. Cysteines 35 and 38 form a disulfide. Residues 44 to 60 (GLMAMGFVALIAFLHNP) traverse the membrane as a helical segment. The Cytoplasmic portion of the chain corresponds to 61–67 (VSNAIKR). A helical transmembrane segment spans residues 68-85 (FYAFLAGVAILWSVGVAG). Residues 86-142 (RHVWLQHLPPDQVPSCGPGLNYLIDALPMKTVLQEVLSGSGECAAIDWTFLGQSLPV) are Periplasmic-facing. A disulfide bond links Cys-101 and Cys-128. Residues 143–161 (WSLAYFLLLLLVCLWQLFR) traverse the membrane as a helical segment. Topologically, residues 162 to 171 (FYPVFKTAKK) are cytoplasmic.

Belongs to the DsbB family.

The protein localises to the cell inner membrane. Its function is as follows. Required for disulfide bond formation in some periplasmic proteins. Acts by oxidizing the DsbA protein. This Acinetobacter baumannii (strain ATCC 17978 / DSM 105126 / CIP 53.77 / LMG 1025 / NCDC KC755 / 5377) protein is Disulfide bond formation protein B.